The chain runs to 303 residues: MKRVVLFLLTNLAVIAVLSITARILGVDRFLTANGLNMGMLLAFAALIGFGGAFISLLMSKTMAKWSTRARVIERPGNQDEAWLVDTVRQLSKKAGLPMPEVAIFDGAPNAFATGASKSKSLVAVSTGLLQSMDRKQVAAVLAHEVAHVENGDMVTLTLIQGVVNTFVIFLSRALGYLVDNFLRGDNEESTGPGIGYWISSIAFEIVFGVLASIVVMYFSRKREFRADAGAAKLMGDRRPMIDALRTLGGLQAGQLPKEMAASGIAGGGMMALFSSHPPLESRIAALESATPPSTPTPSRRGS.

The next 2 helical transmembrane spans lie at 4 to 24 (VVLF…TARI) and 38 to 58 (MGML…ISLL). A Zn(2+)-binding site is contributed by His144. Glu145 is an active-site residue. Residue His148 coordinates Zn(2+). A run of 2 helical transmembrane segments spans residues 152 to 172 (GDMV…IFLS) and 199 to 219 (ISSI…VMYF). Glu224 is a binding site for Zn(2+).

This sequence belongs to the peptidase M48B family. The cofactor is Zn(2+).

Its subcellular location is the cell inner membrane. The polypeptide is Protease HtpX homolog (Chlorobium phaeobacteroides (strain BS1)).